The sequence spans 82 residues: Small ribosomal subunit protein bS18 (82 aa).

Belongs to the bacterial ribosomal protein bS18 family. In terms of assembly, part of the 30S ribosomal subunit. Forms a tight heterodimer with protein bS6.

In terms of biological role, binds as a heterodimer with protein bS6 to the central domain of the 16S rRNA, where it helps stabilize the platform of the 30S subunit. The protein is Small ribosomal subunit protein bS18 of Rhizobium rhizogenes (strain K84 / ATCC BAA-868) (Agrobacterium radiobacter).